We begin with the raw amino-acid sequence, 289 residues long: ATP synthase gamma chain (289 aa).

This sequence belongs to the ATPase gamma chain family. As to quaternary structure, F-type ATPases have 2 components, CF(1) - the catalytic core - and CF(0) - the membrane proton channel. CF(1) has five subunits: alpha(3), beta(3), gamma(1), delta(1), epsilon(1). CF(0) has three main subunits: a, b and c.

The protein localises to the cell inner membrane. In terms of biological role, produces ATP from ADP in the presence of a proton gradient across the membrane. The gamma chain is believed to be important in regulating ATPase activity and the flow of protons through the CF(0) complex. This chain is ATP synthase gamma chain, found in Erwinia tasmaniensis (strain DSM 17950 / CFBP 7177 / CIP 109463 / NCPPB 4357 / Et1/99).